Here is a 143-residue protein sequence, read N- to C-terminus: Anti-sigma F factor (143 aa).

It belongs to the anti-sigma-factor family.

The enzyme catalyses L-seryl-[protein] + ATP = O-phospho-L-seryl-[protein] + ADP + H(+). It catalyses the reaction L-threonyl-[protein] + ATP = O-phospho-L-threonyl-[protein] + ADP + H(+). Functionally, binds to sigma F and blocks its ability to form an RNA polymerase holoenzyme (E-sigma F). Phosphorylates SpoIIAA on a serine residue. This phosphorylation may enable SpoIIAA to act as an anti-anti-sigma factor that counteracts SpoIIAB and thus releases sigma F from inhibition. This Clostridium acetobutylicum (strain ATCC 824 / DSM 792 / JCM 1419 / IAM 19013 / LMG 5710 / NBRC 13948 / NRRL B-527 / VKM B-1787 / 2291 / W) protein is Anti-sigma F factor.